Reading from the N-terminus, the 93-residue chain is Small ribosomal subunit protein uS19 (93 aa).

Belongs to the universal ribosomal protein uS19 family.

Functionally, protein S19 forms a complex with S13 that binds strongly to the 16S ribosomal RNA. The sequence is that of Small ribosomal subunit protein uS19 from Lactobacillus helveticus (strain DPC 4571).